Consider the following 37-residue polypeptide: M-oxotoxin-Ot2c (37 aa).

As to expression, expressed by the venom gland.

The protein resides in the secreted. Its function is as follows. Disrupts biological membranes, particularly those rich in phosphocholine. Has antimicrobial activity against Gram-negative bacterium E.coli, Gram-positive bacteria B.subtilis and S.aureus, and hemolytic activity against sheep, pig and guinea pig red blood cells. Has insecticidal activity against S.frugiperda ovarian cells by opening non-selective ion channels. Enhances the insecticidal activity of spider venom neurotoxic peptides. The sequence is that of M-oxotoxin-Ot2c from Oxyopes takobius (Lynx spider).